Reading from the N-terminus, the 102-residue chain is MAPFQSNKDLISTGIKEFNVLLDQQVFDDPLISEEDMVIVVHDWVNLYTNYYKKLVHGEQEEQDRAMTEFQQELSTLGSQFLAKYRTFLKSKEPPSNTLPSS.

Belongs to the AHSP family. Monomer. Forms a heterodimer with free alpha-hemoglobin. Does not bind beta-hemoglobin nor alpha(2)beta(2) hemoglobin A. As to expression, expressed in spleen, bone marrow, and blood, with highest levels in bone marrow.

Its subcellular location is the cytoplasm. Acts as a chaperone to prevent the harmful aggregation of alpha-hemoglobin during normal erythroid cell development. Specifically protects free alpha-hemoglobin from precipitation. The chain is Alpha-hemoglobin-stabilizing protein (Ahsp) from Mus musculus (Mouse).